The chain runs to 459 residues: Phosphoglucosamine mutase (459 aa).

The active-site Phosphoserine intermediate is the serine 106. 4 residues coordinate Mg(2+): serine 106, aspartate 247, aspartate 249, and aspartate 251. At serine 106 the chain carries Phosphoserine.

The protein belongs to the phosphohexose mutase family. Mg(2+) serves as cofactor. Activated by phosphorylation.

The enzyme catalyses alpha-D-glucosamine 1-phosphate = D-glucosamine 6-phosphate. Functionally, catalyzes the conversion of glucosamine-6-phosphate to glucosamine-1-phosphate. The chain is Phosphoglucosamine mutase from Chlamydia muridarum (strain MoPn / Nigg).